The chain runs to 312 residues: Aspartate carbamoyltransferase catalytic subunit (312 aa).

Carbamoyl phosphate is bound by residues R54 and T55. K83 is a binding site for L-aspartate. Residues R104, H132, and Q135 each contribute to the carbamoyl phosphate site. R165 and R226 together coordinate L-aspartate. Positions 263 and 264 each coordinate carbamoyl phosphate.

It belongs to the aspartate/ornithine carbamoyltransferase superfamily. ATCase family. In terms of assembly, heterooligomer of catalytic and regulatory chains.

It carries out the reaction carbamoyl phosphate + L-aspartate = N-carbamoyl-L-aspartate + phosphate + H(+). The protein operates within pyrimidine metabolism; UMP biosynthesis via de novo pathway; (S)-dihydroorotate from bicarbonate: step 2/3. Catalyzes the condensation of carbamoyl phosphate and aspartate to form carbamoyl aspartate and inorganic phosphate, the committed step in the de novo pyrimidine nucleotide biosynthesis pathway. This chain is Aspartate carbamoyltransferase catalytic subunit, found in Methanothermobacter thermautotrophicus (strain ATCC 29096 / DSM 1053 / JCM 10044 / NBRC 100330 / Delta H) (Methanobacterium thermoautotrophicum).